Consider the following 142-residue polypeptide: 5a,11a-dehydrotetracycline/5a,11a-dehydrooxytetracycline reductase (142 aa).

Belongs to the pyridoxamine 5'-phosphate oxidase family.

The enzyme catalyses tetracycline + oxidized coenzyme F420-(gamma-L-Glu)(n) + H(+) = 5a,11a-dehydrotetracycline + reduced coenzyme F420-(gamma-L-Glu)(n). It carries out the reaction oxytetracycline + oxidized coenzyme F420-(gamma-L-Glu)(n) + H(+) = 5a,11a-dehydrooxytetracycline + reduced coenzyme F420-(gamma-L-Glu)(n). It participates in antibiotic biosynthesis; oxytetracycline biosynthesis. Involved in the biosynthesis of the antibiotics tetracycline and oxytetracycline. Catalyzes the C(5) reduction of 5a,11a-dehydrooxytetracycline to yield oxytetracycline as a major product. Also catalyzes the C(12) reduction of 5a,11a-dehydrotetracycline (12-dehydrotetracycline) to produce tetracycline as a minor product. The chain is 5a,11a-dehydrotetracycline/5a,11a-dehydrooxytetracycline reductase from Streptomyces rimosus subsp. rimosus (strain ATCC 10970 / DSM 40260 / JCM 4667 / NRRL 2234).